A 75-amino-acid chain; its full sequence is Porwaprin-b (75 aa).

The N-terminal stretch at 1-24 (MSSGGLLLLLGLLTLWAELTPVSG) is a signal peptide. One can recognise a WAP domain in the interval 27 to 72 (RPVKPGLCPPRPQKPPCVKECKNDWSCRGEQKCCHYGCIYECRDPI). 4 disulfide bridges follow: C34–C60, C43–C64, C47–C59, and C53–C68.

It belongs to the venom waprin family. In terms of tissue distribution, expressed by the venom gland.

The protein resides in the secreted. Damages membranes of susceptible bacteria. Has no hemolytic activity. Not toxic to mice. Does not inhibit the proteinases elastase and cathepsin G. This Pseudechis porphyriacus (Red-bellied black snake) protein is Porwaprin-b.